The sequence spans 296 residues: Cytidine deaminase (296 aa).

CMP/dCMP-type deaminase domains lie at 47–167 (DSHE…FGPA) and 186–296 (ESDD…VDPV). 88–90 (NLE) provides a ligand contact to substrate. Zn(2+) is bound at residue histidine 101. The active-site Proton donor is the glutamate 103. Cysteine 128 and cysteine 131 together coordinate Zn(2+).

This sequence belongs to the cytidine and deoxycytidylate deaminase family. As to quaternary structure, homodimer. Requires Zn(2+) as cofactor.

The catalysed reaction is cytidine + H2O + H(+) = uridine + NH4(+). It catalyses the reaction 2'-deoxycytidine + H2O + H(+) = 2'-deoxyuridine + NH4(+). In terms of biological role, this enzyme scavenges exogenous and endogenous cytidine and 2'-deoxycytidine for UMP synthesis. This chain is Cytidine deaminase, found in Shewanella amazonensis (strain ATCC BAA-1098 / SB2B).